The following is a 356-amino-acid chain: Tetraacyldisaccharide 4'-kinase (356 aa).

Position 51–58 (51–58 (GWGGSGKT)) interacts with ATP.

It belongs to the LpxK family.

The enzyme catalyses a lipid A disaccharide + ATP = a lipid IVA + ADP + H(+). The protein operates within glycolipid biosynthesis; lipid IV(A) biosynthesis; lipid IV(A) from (3R)-3-hydroxytetradecanoyl-[acyl-carrier-protein] and UDP-N-acetyl-alpha-D-glucosamine: step 6/6. Its function is as follows. Transfers the gamma-phosphate of ATP to the 4'-position of a tetraacyldisaccharide 1-phosphate intermediate (termed DS-1-P) to form tetraacyldisaccharide 1,4'-bis-phosphate (lipid IVA). The polypeptide is Tetraacyldisaccharide 4'-kinase (Oleidesulfovibrio alaskensis (strain ATCC BAA-1058 / DSM 17464 / G20) (Desulfovibrio alaskensis)).